The chain runs to 253 residues: Dof zinc finger protein DOF3.4 (253 aa).

The Dof-type zinc finger occupies 30–84 (LPCPRCDSSNTKFCYYNNYNFSQPRHFCKACRRYWTHGGTLRDVPVGGGTRKSAK). Zn(2+) contacts are provided by cysteine 32, cysteine 35, cysteine 57, and cysteine 60. The disordered stretch occupies residues 73-103 (VPVGGGTRKSAKRSRTCSNSSSSSVSGVVSN). Low complexity predominate over residues 90–103 (SNSSSSSVSGVVSN).

In terms of assembly, interacts with OBF4 or OBF5. Constitutively expressed in the whole plant.

It localises to the nucleus. Functionally, transcription factor that binds specifically to a 5'-AA[AG]G-3' consensus core sequence. Enhances the DNA binding of OBF transcription factors to OCS elements. The polypeptide is Dof zinc finger protein DOF3.4 (DOF3.4) (Arabidopsis thaliana (Mouse-ear cress)).